The primary structure comprises 606 residues: Threonine--tRNA ligase (606 aa).

The interval 212 to 503 (DHRKLGVEMK…LIEHTAGELP (292 aa)) is catalytic. Zn(2+) contacts are provided by Cys304, His355, and His480.

Belongs to the class-II aminoacyl-tRNA synthetase family. As to quaternary structure, homodimer. Zn(2+) serves as cofactor.

The protein resides in the cytoplasm. It carries out the reaction tRNA(Thr) + L-threonine + ATP = L-threonyl-tRNA(Thr) + AMP + diphosphate + H(+). Functionally, catalyzes the attachment of threonine to tRNA(Thr) in a two-step reaction: L-threonine is first activated by ATP to form Thr-AMP and then transferred to the acceptor end of tRNA(Thr). Also edits incorrectly charged L-seryl-tRNA(Thr). This chain is Threonine--tRNA ligase, found in Campylobacter curvus (strain 525.92).